The primary structure comprises 347 residues: Holliday junction branch migration complex subunit RuvB (347 aa).

The tract at residues 1–185 is large ATPase domain (RuvB-L); it reads MSDDPTTPEL…FGFTAHLEFY (185 aa). ATP contacts are provided by residues leucine 24, arginine 25, glycine 66, lysine 69, threonine 70, threonine 71, 132-134, arginine 175, tyrosine 185, and arginine 222; that span reads EDF. Position 70 (threonine 70) interacts with Mg(2+). Residues 186 to 255 are small ATPAse domain (RuvB-S); it reads DEGELAQVLA…AVHAALELYD (70 aa). The head domain (RuvB-H) stretch occupies residues 258 to 347; the sequence is ELGLDRLDRA…SQPPSLMDDL (90 aa). Residues arginine 313 and arginine 318 each coordinate DNA.

The protein belongs to the RuvB family. As to quaternary structure, homohexamer. Forms an RuvA(8)-RuvB(12)-Holliday junction (HJ) complex. HJ DNA is sandwiched between 2 RuvA tetramers; dsDNA enters through RuvA and exits via RuvB. An RuvB hexamer assembles on each DNA strand where it exits the tetramer. Each RuvB hexamer is contacted by two RuvA subunits (via domain III) on 2 adjacent RuvB subunits; this complex drives branch migration. In the full resolvosome a probable DNA-RuvA(4)-RuvB(12)-RuvC(2) complex forms which resolves the HJ.

It localises to the cytoplasm. The enzyme catalyses ATP + H2O = ADP + phosphate + H(+). Functionally, the RuvA-RuvB-RuvC complex processes Holliday junction (HJ) DNA during genetic recombination and DNA repair, while the RuvA-RuvB complex plays an important role in the rescue of blocked DNA replication forks via replication fork reversal (RFR). RuvA specifically binds to HJ cruciform DNA, conferring on it an open structure. The RuvB hexamer acts as an ATP-dependent pump, pulling dsDNA into and through the RuvAB complex. RuvB forms 2 homohexamers on either side of HJ DNA bound by 1 or 2 RuvA tetramers; 4 subunits per hexamer contact DNA at a time. Coordinated motions by a converter formed by DNA-disengaged RuvB subunits stimulates ATP hydrolysis and nucleotide exchange. Immobilization of the converter enables RuvB to convert the ATP-contained energy into a lever motion, pulling 2 nucleotides of DNA out of the RuvA tetramer per ATP hydrolyzed, thus driving DNA branch migration. The RuvB motors rotate together with the DNA substrate, which together with the progressing nucleotide cycle form the mechanistic basis for DNA recombination by continuous HJ branch migration. Branch migration allows RuvC to scan DNA until it finds its consensus sequence, where it cleaves and resolves cruciform DNA. This chain is Holliday junction branch migration complex subunit RuvB, found in Leifsonia xyli subsp. xyli (strain CTCB07).